Consider the following 760-residue polypeptide: Pentatricopeptide repeat-containing protein At1g20230 (760 aa).

15 PPR repeats span residues Asp49–Pro79, Thr80–Pro114, Asp115–Met149, Asp150–Lys180, Asp181–Ala215, Asn216–Pro250, Asp251–Lys285, Asp286–Met316, Glu317–Leu351, Asn352–Pro386, Asn387–Asp421, Asn422–Lys452, Asn453–Pro487, Asp488–Pro523, and Arg524–Glu554. Positions Val559–Lys634 are type E motif. The interval Asn635 to Arg665 is type E(+) motif. The type DYW motif stretch occupies residues Lys666–Trp760.

Belongs to the PPR family. PCMP-H subfamily.

This chain is Pentatricopeptide repeat-containing protein At1g20230 (PCMP-H21), found in Arabidopsis thaliana (Mouse-ear cress).